Here is a 620-residue protein sequence, read N- to C-terminus: 1-deoxy-D-xylulose-5-phosphate synthase (620 aa).

Residues histidine 80 and 121–123 each bind thiamine diphosphate; that span reads GHS. Aspartate 152 contributes to the Mg(2+) binding site. Thiamine diphosphate is bound by residues 153 to 154, asparagine 181, tyrosine 288, and glutamate 370; that span reads GA. Residue asparagine 181 coordinates Mg(2+).

This sequence belongs to the transketolase family. DXPS subfamily. As to quaternary structure, homodimer. Mg(2+) serves as cofactor. It depends on thiamine diphosphate as a cofactor.

The catalysed reaction is D-glyceraldehyde 3-phosphate + pyruvate + H(+) = 1-deoxy-D-xylulose 5-phosphate + CO2. It participates in metabolic intermediate biosynthesis; 1-deoxy-D-xylulose 5-phosphate biosynthesis; 1-deoxy-D-xylulose 5-phosphate from D-glyceraldehyde 3-phosphate and pyruvate: step 1/1. Functionally, catalyzes the acyloin condensation reaction between C atoms 2 and 3 of pyruvate and glyceraldehyde 3-phosphate to yield 1-deoxy-D-xylulose-5-phosphate (DXP). The polypeptide is 1-deoxy-D-xylulose-5-phosphate synthase (Klebsiella pneumoniae (strain 342)).